A 222-amino-acid chain; its full sequence is Phosphoglycolate phosphatase (222 aa).

Asp12 serves as the catalytic Nucleophile. Asp12, Asp14, and Asp175 together coordinate Mg(2+).

The protein belongs to the HAD-like hydrolase superfamily. CbbY/CbbZ/Gph/YieH family. Mg(2+) is required as a cofactor.

It carries out the reaction 2-phosphoglycolate + H2O = glycolate + phosphate. It functions in the pathway organic acid metabolism; glycolate biosynthesis; glycolate from 2-phosphoglycolate: step 1/1. Specifically catalyzes the dephosphorylation of 2-phosphoglycolate. Is involved in the dissimilation of the intracellular 2-phosphoglycolate formed during the DNA repair of 3'-phosphoglycolate ends, a major class of DNA lesions induced by oxidative stress. This is Phosphoglycolate phosphatase from Chromobacterium violaceum (strain ATCC 12472 / DSM 30191 / JCM 1249 / CCUG 213 / NBRC 12614 / NCIMB 9131 / NCTC 9757 / MK).